The primary structure comprises 88 residues: U1-hexatoxin-Iw1d (88 aa).

An N-terminal signal peptide occupies residues 1 to 17 (LKFVVLICLVIMASTSA). Gln18 is modified (pyrrolidone carboxylic acid). Cystine bridges form between Cys20/Cys31, Cys25/Cys39, Cys30/Cys65, Cys49/Cys73, and Cys67/Cys80. A propeptide spanning residues 86–88 (RSE) is cleaved from the precursor.

This sequence belongs to the MIT-like AcTx family. Expressed by the venom gland.

The protein localises to the secreted. This Illawarra wisharti (Illawarra funnel-web spider) protein is U1-hexatoxin-Iw1d.